Consider the following 106-residue polypeptide: MICOS complex subunit MIC12 (106 aa).

Residues 11-27 traverse the membrane as a helical segment; it reads VKWTLSVGVIGSVFYLY.

It belongs to the MICOS complex subunit Mic12 family. Component of the mitochondrial contact site and cristae organizing system (MICOS) complex.

It localises to the mitochondrion inner membrane. Functionally, component of the MICOS complex, a large protein complex of the mitochondrial inner membrane that plays crucial roles in the maintenance of crista junctions, inner membrane architecture, and formation of contact sites to the outer membrane. The protein is MICOS complex subunit MIC12 (AIM5) of Saccharomyces cerevisiae (strain RM11-1a) (Baker's yeast).